The primary structure comprises 513 residues: MAIAVNRPLMLMILDGFGLGPEGEGNAISQGRLPNYRRLLAGYPHTRLRASGEAVGLPAGQMGNSEVGHLNIGAGRIVYQELTRISKAIRDGSFFSNAALVGAVRAAREHGGALHLMGLVSDGGVHSHLDHLYALLDLAKREGLERVYIHAFLDGRDVPPASAAGYLEQVEDECRQKGIGAIATIMGRYYAMDRDRRWERTARAYRALVAGEGHQASSPSEAIRASYERDITDEFVEPAVITRDGRPLATVREGDSVVFFNFRADRARQLTRAFVDRDFDAFERPGGRLDIQFVCLTQYDVTIPAPVAFPPQVLQNVLGEVIAGAGLKQLRIAETEKYAHVTFFFNGGVEEPFPGEDRLLIPSPKVATYDQKPSMSAREVTDAVLERLDKYDFIVLNFANPDMVGHTGDLAAAIAAVETVDECIGRIVQAMAERRAPLLLTADHGNAEEMREPDGEPHTAHTSNLVPFILVDDRYRGASLREGALEDVAPTVLDILHIQQPAEMTGKSLIVKG.

Mn(2+) contacts are provided by Asp15 and Ser65. The Phosphoserine intermediate role is filled by Ser65. Substrate-binding positions include His126, Arg156–Asp157, Arg188, Arg194, Arg263–Arg266, and Lys337. Positions 402, 406, 443, 444, and 461 each coordinate Mn(2+).

This sequence belongs to the BPG-independent phosphoglycerate mutase family. In terms of assembly, monomer. The cofactor is Mn(2+).

It catalyses the reaction (2R)-2-phosphoglycerate = (2R)-3-phosphoglycerate. It functions in the pathway carbohydrate degradation; glycolysis; pyruvate from D-glyceraldehyde 3-phosphate: step 3/5. Its function is as follows. Catalyzes the interconversion of 2-phosphoglycerate and 3-phosphoglycerate. This is 2,3-bisphosphoglycerate-independent phosphoglycerate mutase from Moorella thermoacetica (strain ATCC 39073 / JCM 9320).